The following is a 343-amino-acid chain: Transcription factor BPE (343 aa).

The bHLH domain maps to 142-192; that stretch reads QATDSHSLAERARREKISERMKILQDLVPGCNKVIGKALVLDEIINYIQSL.

In terms of assembly, homodimer. In terms of tissue distribution, specifically expressed in flowers, mostly in petals, inflorescence and flower buds. Expressed ubiquitously (leaves, flowers and stems).

Its subcellular location is the nucleus. Its function is as follows. Involved in the control of petal size, by interfering with postmitotic cell expansion to limit final petal cell size. The sequence is that of Transcription factor BPE (BPE) from Arabidopsis thaliana (Mouse-ear cress).